Here is a 119-residue protein sequence, read N- to C-terminus: U9-hexatoxin-Hi1 (119 aa).

The signal sequence occupies residues 1-17; it reads MKLYLVILVTSVALAAA. The propeptide occupies 18–53; it reads SPTRTKEEPIEDELLEALLSVEKSLFNEETTVMEKR. 4 disulfides stabilise this stretch: cysteine 55–cysteine 73, cysteine 66–cysteine 79, cysteine 70–cysteine 117, and cysteine 72–cysteine 88.

This sequence belongs to the neurotoxin 03 (Tx2) family. 03 subfamily. Expressed by the venom gland.

The protein resides in the secreted. Probable ion channel inhibitor. This chain is U9-hexatoxin-Hi1, found in Hadronyche infensa (Fraser island funnel-web spider).